Here is a 1223-residue protein sequence, read N- to C-terminus: A disintegrin and metalloproteinase with thrombospondin motifs 14 (1223 aa).

Residues 1 to 22 (MAPLRALLSYLLPLHCALCAAA) form the signal peptide. A propeptide spanning residues 23 to 252 (GSRTPELHLS…QLGDTERKRR (230 aa)) is cleaved from the precursor. A glycan (N-linked (GlcNAc...) asparagine) is linked at N109. The Peptidase M12B domain maps to 259-460 (YSIEVLLVVD…PSYDCLLDDP (202 aa)). 3 disulfide bridges follow: C336/C382, C376/C455, and C415/C441. H398 is a binding site for Zn(2+). E399 is an active-site residue. The Zn(2+) site is built by H402 and H408. In terms of domain architecture, Disintegrin spans 461 to 551 (FDPAWPQPPE…WKSPEQTYGQ (91 aa)). N475 is a glycosylation site (N-linked (GlcNAc...) asparagine). 7 disulfides stabilise this stretch: C482-C507, C493-C516, C502-C535, C529-C540, C564-C601, C568-C606, and C579-C591. Residues 552-607 (DGGWSSWTKFGSCSRSCGGGVRSRSRSCNNPSPAYGGRLCLGPMFEYQVCNSEECP) form the TSP type-1 1 domain. The spacer stretch occupies residues 730 to 846 (LKLVQIPAGA…GSNNVLLEEM (117 aa)). 3 consecutive TSP type-1 domains span residues 847–907 (DTYE…HPCS), 908–967 (QPVW…LRVP), and 968–1022 (CPAQ…PACG). N941 carries an N-linked (GlcNAc...) asparagine glycan. 3 disulfides stabilise this stretch: C980-C1016, C984-C1021, and C995-C1005. Residue N1027 is glycosylated (N-linked (GlcNAc...) asparagine). The 39-residue stretch at 1059-1097 (STEPCTGDRSVFCQMEVLDRYCSIPGYHRLCCVSCIKKA) folds into the PLAC domain. The disordered stretch occupies residues 1100–1223 (PNPGPDPGPT…TSLPAASPVT (124 aa)). Over residues 1101 to 1125 (NPGPDPGPTSLPPFSTPGSPLPGPQ) the composition is skewed to pro residues. Residues 1199 to 1211 (PEDKGQPGEDLRH) show a composition bias toward basic and acidic residues.

In terms of processing, the precursor is cleaved by a furin endopeptidase. Glycosylated. Can be O-fucosylated by POFUT2 on a serine or a threonine residue found within the consensus sequence C1-X(2)-(S/T)-C2-G of the TSP type-1 repeat domains where C1 and C2 are the first and second cysteine residue of the repeat, respectively. Fucosylated repeats can then be further glycosylated by the addition of a beta-1,3-glucose residue by the glucosyltransferase, B3GALTL. Fucosylation mediates the efficient secretion of ADAMTS family members. Can also be C-glycosylated with one or two mannose molecules on tryptophan residues within the consensus sequence W-X-X-W of the TPRs, and N-glycosylated. These other glycosylations can also facilitate secretion. In terms of tissue distribution, expressed in retina and at low levels in brain, lung and placenta. High expression in fetal tissues.

The protein resides in the secreted. Its subcellular location is the extracellular space. The protein localises to the extracellular matrix. Its function is as follows. Has aminoprocollagen type I processing activity in the absence of ADAMTS2. Seems to be synthesized as a latent enzyme that requires activation to display aminoprocollagen peptidase activity. Cleaves lysyl oxidase LOX at a site downstream of its propeptide cleavage site to produce a short LOX form. This Homo sapiens (Human) protein is A disintegrin and metalloproteinase with thrombospondin motifs 14 (ADAMTS14).